The sequence spans 352 residues: Probable protein kinase DDB_G0291842 (352 aa).

The tract at residues 1–57 is disordered; sequence MRPLPDQSAFEDKSELVSKKQKNEDENNENRSPETPRTPKVCPKTPTKTPLRTPTKN. A compositionally biased stretch (basic and acidic residues) spans 10–34; that stretch reads FEDKSELVSKKQKNEDENNENRSPE. The segment covering 38 to 56 has biased composition (low complexity); the sequence is TPKVCPKTPTKTPLRTPTK. One can recognise a Protein kinase domain in the interval 77 to 331; that stretch reads FEYINQIGEG…IQSLLKYDKL (255 aa). Residues 83–91 and Lys106 contribute to the ATP site; that span reads IGEGSFAKV. Asp207 serves as the catalytic Proton acceptor. Mg(2+) contacts are provided by Asn212 and Asp225.

This sequence belongs to the protein kinase superfamily. Ser/Thr protein kinase family. WEE1 subfamily.

It catalyses the reaction L-seryl-[protein] + ATP = O-phospho-L-seryl-[protein] + ADP + H(+). It carries out the reaction L-threonyl-[protein] + ATP = O-phospho-L-threonyl-[protein] + ADP + H(+). This is Probable protein kinase DDB_G0291842 from Dictyostelium discoideum (Social amoeba).